We begin with the raw amino-acid sequence, 440 residues long: Dihydrolipoyllysine-residue acetyltransferase component of pyruvate dehydrogenase complex (440 aa).

The Lipoyl-binding domain occupies 2–78 (SIEVKMPALS…AVGQVIAVMA (77 aa)). Lysine 43 is modified (N6-lipoyllysine). Residues 91–113 (ASSQISEPSEKADVAQKETADSE) are disordered. The segment covering 98-110 (PSEKADVAQKETA) has biased composition (basic and acidic residues). Residues 149–186 (KASPLAKRLAKKNHVDLKQVNGSGPHGRIIKADIEAFI) enclose the Peripheral subunit-binding (PSBD) domain. The span at 192 to 202 (ASSNPSVSTPE) shows a compositional bias: polar residues. The tract at residues 192 to 214 (ASSNPSVSTPEASGKITHDTPHN) is disordered. Histidine 412 is a catalytic residue.

It belongs to the 2-oxoacid dehydrogenase family. In terms of assembly, forms a 24-polypeptide structural core with octahedral symmetry. (R)-lipoate is required as a cofactor.

It catalyses the reaction N(6)-[(R)-dihydrolipoyl]-L-lysyl-[protein] + acetyl-CoA = N(6)-[(R)-S(8)-acetyldihydrolipoyl]-L-lysyl-[protein] + CoA. The pyruvate dehydrogenase complex catalyzes the overall conversion of pyruvate to acetyl-CoA and CO(2). It contains multiple copies of three enzymatic components: pyruvate dehydrogenase (E1), dihydrolipoamide acetyltransferase (E2) and lipoamide dehydrogenase (E3). In Zymomonas mobilis subsp. mobilis (strain ATCC 31821 / ZM4 / CP4), this protein is Dihydrolipoyllysine-residue acetyltransferase component of pyruvate dehydrogenase complex (pdhC).